We begin with the raw amino-acid sequence, 356 residues long: UDP-N-acetylglucosamine--N-acetylmuramyl-(pentapeptide) pyrophosphoryl-undecaprenol N-acetylglucosamine transferase (356 aa).

Arg-166, Ser-196, and Gln-290 together coordinate UDP-N-acetyl-alpha-D-glucosamine.

It belongs to the glycosyltransferase 28 family. MurG subfamily.

The protein resides in the cell membrane. The catalysed reaction is Mur2Ac(oyl-L-Ala-gamma-D-Glu-L-Lys-D-Ala-D-Ala)-di-trans,octa-cis-undecaprenyl diphosphate + UDP-N-acetyl-alpha-D-glucosamine = beta-D-GlcNAc-(1-&gt;4)-Mur2Ac(oyl-L-Ala-gamma-D-Glu-L-Lys-D-Ala-D-Ala)-di-trans,octa-cis-undecaprenyl diphosphate + UDP + H(+). Its pathway is cell wall biogenesis; peptidoglycan biosynthesis. Its function is as follows. Cell wall formation. Catalyzes the transfer of a GlcNAc subunit on undecaprenyl-pyrophosphoryl-MurNAc-pentapeptide (lipid intermediate I) to form undecaprenyl-pyrophosphoryl-MurNAc-(pentapeptide)GlcNAc (lipid intermediate II). The sequence is that of UDP-N-acetylglucosamine--N-acetylmuramyl-(pentapeptide) pyrophosphoryl-undecaprenol N-acetylglucosamine transferase from Staphylococcus aureus (strain Mu3 / ATCC 700698).